The following is a 933-amino-acid chain: Exosome complex exonuclease RRP44 homolog A (933 aa).

The PINc domain occupies 50 to 163; the sequence is KIIVVDTNVV…LVTNDRENKR (114 aa). Residues 217–321 form the CSD1 domain; it reads QEHKPMSEIT…NVDDAPRTSN (105 aa). The segment at 296–336 is disordered; the sequence is AEEDDEEDDTVHLAPDNVDDAPRTSNLSHETSGDKNAAPVR. A CSD2 domain is found at 371–438; sequence ALFVSKDRRI…ETEVVLIEND (68 aa). An RNB domain is found at 469–798; the sequence is RQDLRHLLVF…FVHRLLAASL (330 aa). Mg(2+) is bound by residues aspartate 481 and aspartate 490.

This sequence belongs to the RNR ribonuclease family. In terms of assembly, probable component of the RNA exosome complex. The cofactor is Mg(2+).

It is found in the nucleus. In terms of biological role, catalytic component of the RNA exosome complex which has 3'-&gt;5' exoribonuclease activity and participates in a multitude of cellular RNA processing and degradation events. Required for 5.8S rRNA intermediate processing and the degradation of 5' external transcribed spacer (5' ETS), a maturation by-product of rRNA synthesis. Is not involved in the degradation of turnip crinkle virus (TCV) RNA and significant virus resistance. Required for normal development of female gametophytes and early embryogenesis. The polypeptide is Exosome complex exonuclease RRP44 homolog A (Arabidopsis thaliana (Mouse-ear cress)).